Consider the following 125-residue polypeptide: Large ribosomal subunit protein uL22 (125 aa).

This sequence belongs to the universal ribosomal protein uL22 family. Part of the 50S ribosomal subunit.

Its function is as follows. This protein binds specifically to 23S rRNA; its binding is stimulated by other ribosomal proteins, e.g. L4, L17, and L20. It is important during the early stages of 50S assembly. It makes multiple contacts with different domains of the 23S rRNA in the assembled 50S subunit and ribosome. Functionally, the globular domain of the protein is located near the polypeptide exit tunnel on the outside of the subunit, while an extended beta-hairpin is found that lines the wall of the exit tunnel in the center of the 70S ribosome. This chain is Large ribosomal subunit protein uL22, found in Novosphingobium aromaticivorans (strain ATCC 700278 / DSM 12444 / CCUG 56034 / CIP 105152 / NBRC 16084 / F199).